Consider the following 122-residue polypeptide: Large ribosomal subunit protein uL14 (122 aa).

This sequence belongs to the universal ribosomal protein uL14 family. In terms of assembly, part of the 50S ribosomal subunit. Forms a cluster with proteins L3 and L19. In the 70S ribosome, L14 and L19 interact and together make contacts with the 16S rRNA in bridges B5 and B8.

In terms of biological role, binds to 23S rRNA. Forms part of two intersubunit bridges in the 70S ribosome. This is Large ribosomal subunit protein uL14 from Pseudothermotoga lettingae (strain ATCC BAA-301 / DSM 14385 / NBRC 107922 / TMO) (Thermotoga lettingae).